Here is a 353-residue protein sequence, read N- to C-terminus: Photosystem II protein D1 (353 aa).

The residue at position 2 (T2) is an N-acetylthreonine. T2 carries the post-translational modification Phosphothreonine. Helical transmembrane passes span 29–46, 118–133, and 142–156; these read YIGW…TATS, HFLL…EWEL, and WIAV…AATA. H118 is a chlorophyll a binding site. Residue Y126 coordinates pheophytin a. [CaMn4O5] cluster is bound by residues D170 and E189. Residues 197–218 traverse the membrane as a helical segment; the sequence is FHMLGVAGVFGGSLFSAMHGSL. H198 contributes to the chlorophyll a binding site. A quinone is bound by residues H215 and 264 to 265; that span reads SF. H215 provides a ligand contact to Fe cation. A Fe cation-binding site is contributed by H272. The helical transmembrane segment at 274–288 threads the bilayer; sequence FLAAWPVVGIWFTAL. The [CaMn4O5] cluster site is built by H332, E333, D342, and A344. The propeptide occupies 345–353; sequence AVEVPSTNG.

It belongs to the reaction center PufL/M/PsbA/D family. In terms of assembly, PSII is composed of 1 copy each of membrane proteins PsbA, PsbB, PsbC, PsbD, PsbE, PsbF, PsbH, PsbI, PsbJ, PsbK, PsbL, PsbM, PsbT, PsbX, PsbY, PsbZ, Psb30/Ycf12, at least 3 peripheral proteins of the oxygen-evolving complex and a large number of cofactors. It forms dimeric complexes. The D1/D2 heterodimer binds P680, chlorophylls that are the primary electron donor of PSII, and subsequent electron acceptors. It shares a non-heme iron and each subunit binds pheophytin, quinone, additional chlorophylls, carotenoids and lipids. D1 provides most of the ligands for the Mn4-Ca-O5 cluster of the oxygen-evolving complex (OEC). There is also a Cl(-1) ion associated with D1 and D2, which is required for oxygen evolution. The PSII complex binds additional chlorophylls, carotenoids and specific lipids. serves as cofactor. Post-translationally, tyr-161 forms a radical intermediate that is referred to as redox-active TyrZ, YZ or Y-Z. In terms of processing, C-terminally processed by CTPA; processing is essential to allow assembly of the oxygen-evolving complex and thus photosynthetic growth.

It is found in the plastid. Its subcellular location is the chloroplast thylakoid membrane. The catalysed reaction is 2 a plastoquinone + 4 hnu + 2 H2O = 2 a plastoquinol + O2. Functionally, photosystem II (PSII) is a light-driven water:plastoquinone oxidoreductase that uses light energy to abstract electrons from H(2)O, generating O(2) and a proton gradient subsequently used for ATP formation. It consists of a core antenna complex that captures photons, and an electron transfer chain that converts photonic excitation into a charge separation. The D1/D2 (PsbA/PsbD) reaction center heterodimer binds P680, the primary electron donor of PSII as well as several subsequent electron acceptors. The sequence is that of Photosystem II protein D1 from Calycanthus floridus var. glaucus (Eastern sweetshrub).